A 519-amino-acid polypeptide reads, in one-letter code: Probable cytochrome P450 513D1 (519 aa).

A helical transmembrane segment spans residues 1-21; the sequence is MGISSIIIILFIIVLLKKLIK. Cys-464 contacts heme.

Belongs to the cytochrome P450 family. Heme serves as cofactor.

It is found in the membrane. This is Probable cytochrome P450 513D1 (cyp513D1) from Dictyostelium discoideum (Social amoeba).